Reading from the N-terminus, the 529-residue chain is Delayed-rectifier potassium channel regulatory subunit KCNS1 (529 aa).

Residues 1-217 are Cytoplasmic-facing; sequence MLMLLVRGTR…LTMENPGYSL (217 aa). A helical membrane pass occupies residues 218–239; sequence PSKLFSCVSISVVLASIAAMCI. Residues 240–270 lie on the Extracellular side of the membrane; the sequence is HSLPEYQAREAAAAVAAVAAGRSAEGVRDDP. A helical transmembrane segment spans residues 271 to 293; the sequence is VLRRLEYFCIAWFSFEVSSRLLL. The Cytoplasmic segment spans residues 294 to 304; the sequence is APSTRNFFCHP. A helical membrane pass occupies residues 305–322; the sequence is LNLIDIVSVLPFYLTLLA. Residues 323–340 lie on the Extracellular side of the membrane; that stretch reads GAALGDHGGTGGKEFGHL. The helical; Voltage-sensor transmembrane segment at 341-361 threads the bilayer; it reads GKVVQVFRLMRIFRVLKLARH. Residues 362 to 376 are Cytoplasmic-facing; that stretch reads STGLRSLGATLKHSY. The chain crosses the membrane as a helical span at residues 377 to 398; the sequence is REVGILLLYLAVGVSVFSGVAY. Residues 399–411 are Extracellular-facing; sequence TAEKEEHVGFDTI. An intramembrane region (helical) is located at residues 412–423; the sequence is PACWWWGTVSMT. The Selectivity filter motif lies at 424–429; it reads TVGYGD. Residues 424 to 431 lie within the membrane without spanning it; it reads TVGYGDVV. Residues 432 to 438 are Extracellular-facing; the sequence is PVTVAGK. A helical transmembrane segment spans residues 439–467; the sequence is LAASGCILGGILVVALPITIIFNKFSHFY. Over 468-529 the chain is Cytoplasmic; sequence RRQKALEAAV…PSEPPHSQMY (62 aa). Positions 494–529 are disordered; sequence GVSEASLETSRETSQEGRSADLETQVPSEPPHSQMY. The span at 502–514 shows a compositional bias: basic and acidic residues; sequence TSRETSQEGRSAD.

The protein belongs to the potassium channel family. S (TC 1.A.1.2) subfamily. Kv9.1/KCNS1 sub-subfamily. In terms of assembly, heterotetramer with KCNB1. Heterotetramer with KCNB2. Does not form homomultimers.

It is found in the cell membrane. In terms of biological role, potassium channel regulatory subunit that modulate the delayed rectifier voltage-gated potassium channel activity of KCNB1 and KCNB2 by altering their kinetics, expression levels, and shifting the half-inactivation potential to more polarized values. While it does not form functional channels on its own, it can form functional heterotetrameric channels with KCNB1 and KCNB2. Each regulatory subunit has unique regulatory properties that can lead to extensive inhibition, significant changes in kinetics, and/or substantial shifts in the voltage dependencies of the inactivation process. The sequence is that of Delayed-rectifier potassium channel regulatory subunit KCNS1 from Aotus nancymaae (Ma's night monkey).